The following is an 845-amino-acid chain: Protein TSD2 (845 aa).

The interval 193-283 (DVDSDSESDS…SASATRLTNA (91 aa)) is disordered. Basic and acidic residues-rich tracts occupy residues 202–212 (SDSHSDSHSDS) and 230–242 (ARSHDERQRDGSG). The segment covering 243 to 272 (GKRKRGSHSPLSRRRQRHKQGQRHKPRHRS) has biased composition (basic residues).

This sequence belongs to the CDC45 family.

Its subcellular location is the nucleus. Functionally, temperature-sensitive protein required for DNA synthesis. May be a transcription factor that regulates the level or influences the stability of DNA polymerases or auxiliary proteins. The protein is Protein TSD2 (TSD2) of Mycosarcoma maydis (Corn smut fungus).